The primary structure comprises 251 residues: Triosephosphate isomerase (251 aa).

Residue 9–11 (NWK) participates in substrate binding. Histidine 95 acts as the Electrophile in catalysis. Glutamate 167 serves as the catalytic Proton acceptor. Residues glycine 173, serine 213, and 234–235 (GG) contribute to the substrate site.

Belongs to the triosephosphate isomerase family. In terms of assembly, homodimer.

The protein localises to the cytoplasm. The enzyme catalyses D-glyceraldehyde 3-phosphate = dihydroxyacetone phosphate. The protein operates within carbohydrate biosynthesis; gluconeogenesis. It participates in carbohydrate degradation; glycolysis; D-glyceraldehyde 3-phosphate from glycerone phosphate: step 1/1. Functionally, involved in the gluconeogenesis. Catalyzes stereospecifically the conversion of dihydroxyacetone phosphate (DHAP) to D-glyceraldehyde-3-phosphate (G3P). This Fusobacterium nucleatum subsp. nucleatum (strain ATCC 25586 / DSM 15643 / BCRC 10681 / CIP 101130 / JCM 8532 / KCTC 2640 / LMG 13131 / VPI 4355) protein is Triosephosphate isomerase.